Consider the following 335-residue polypeptide: Replication factor C subunit 4 (335 aa).

56-63 lines the ATP pocket; sequence SGPPGTGK.

It belongs to the activator 1 small subunits family. In terms of assembly, heterotetramer of subunits RFC2, RFC3, RFC4 and RFC5 that can form a complex with RFC1. As to expression, expressed in roots, leaves, shoot apical meristem (SAM), flag leaves and panicles.

Its subcellular location is the nucleus. Its function is as follows. May be involved in DNA replication and thus regulate cell proliferation. The sequence is that of Replication factor C subunit 4 (RFC4) from Oryza sativa subsp. japonica (Rice).